The primary structure comprises 156 residues: Bacterial microcompartment shell protein PduK (156 aa).

The BMC domain occupies 4–89; the sequence is SLGLLEVSGL…PGDGILSHSV (86 aa). Residues 81–119 are disordered; that stretch reads GDGILSHSVTPESESEPAPAPTPVVPHEEIPEDHAAPEA. Residues 106-116 show a composition bias toward basic and acidic residues; that stretch reads PHEEIPEDHAA.

The protein belongs to the bacterial microcompartments protein family. As to quaternary structure, interacts with shell protein PduA and assembly protein PduM. Interacts with PduP, probably with its first 18 residues. Fe cation serves as cofactor.

The protein resides in the bacterial microcompartment. It participates in polyol metabolism; 1,2-propanediol degradation. A minor shell protein of the bacterial microcompartment (BMC) dedicated to 1,2-propanediol (1,2-PD) degradation. Its function is as follows. Expression of a cosmid containing the full 21-gene pdu operon in E.coli allows E.coli to grow on 1,2-propanediol (1,2-PD) with the appearance of bacterial microcompartments (BMC) in its cytoplasm. Overexpression of this protein leads to the appearance of a single large aggregate complex in the cytoplasm. Functionally, the 1,2-PD-specific bacterial microcompartment (BMC) concentrates low levels of 1,2-PD catabolic enzymes, concentrates volatile reaction intermediates thus enhancing pathway flux and keeps the level of toxic, mutagenic propionaldehyde low. The polypeptide is Bacterial microcompartment shell protein PduK (Citrobacter freundii).